The primary structure comprises 335 residues: Zinc transporter ZIP11 (335 aa).

7 helical membrane passes run 12–32 (LLGTFFTWAMTAAGAALVFIF), 44–64 (LGFAAGVMLAASYWSLLAPAV), 72–92 (GFGAFAFFPVAVGFTLGAAFV), 187–207 (IALLILAITIHNIPEGLAVGV), 256–278 (FWYGQLSGMVEPLAGVFGAFAVV), 283–300 (VLPYALAFAAGAMVYVVM), and 315–335 (LASWASILGFVVMMSLDVGLG).

This sequence belongs to the ZIP transporter (TC 2.A.5) family.

It localises to the cell membrane. The protein localises to the nucleus. The protein resides in the cytoplasm. It is found in the golgi apparatus. The catalysed reaction is Zn(2+)(in) = Zn(2+)(out). It carries out the reaction Cu(2+)(in) = Cu(2+)(out). Zinc importer that regulates cytosolic zinc concentrations either via zinc influx from the extracellular compartment or efflux from intracellular organelles such as Golgi apparatus. May transport copper ions as well. The transport mechanism remains to be elucidated. This is Zinc transporter ZIP11 (Slc39a11) from Rattus norvegicus (Rat).